The primary structure comprises 223 residues: Adenine phosphoribosyltransferase (223 aa).

It belongs to the purine/pyrimidine phosphoribosyltransferase family. Homodimer.

It localises to the cytoplasm. It carries out the reaction AMP + diphosphate = 5-phospho-alpha-D-ribose 1-diphosphate + adenine. It participates in purine metabolism; AMP biosynthesis via salvage pathway; AMP from adenine: step 1/1. Its function is as follows. Catalyzes a salvage reaction resulting in the formation of AMP, that is energically less costly than de novo synthesis. This is Adenine phosphoribosyltransferase from Mycobacterium bovis (strain ATCC BAA-935 / AF2122/97).